The chain runs to 230 residues: MASLGLQLVGYILGLLGLLGTLVAMLLPSWKTSSYVGASIVTAVGFSKGLWMECATHSTGITQCDIYSTLLGLPADIQAAQAMMVTSSAISSLACIISVVGMRCTVFCQESRAKDRVAVAGGVFFILGGLLGFIPVAWNLHGILRDFYSPLVPDSMKFEIGEALYLGIISSLFSLIAGIILCFSCSSQRNRSNYYDAYQAQPLATRSSPRPGQPPKVKSEFNSYSLTGYV.

Topologically, residues 1-7 are cytoplasmic; sequence MASLGLQ. A helical membrane pass occupies residues 8-28; sequence LVGYILGLLGLLGTLVAMLLP. Topologically, residues 29-81 are extracellular; that stretch reads SWKTSSYVGASIVTAVGFSKGLWMECATHSTGITQCDIYSTLLGLPADIQAAQ. A disulfide bond links Cys-54 and Cys-64. Residues 82–102 form a helical membrane-spanning segment; sequence AMMVTSSAISSLACIISVVGM. Over 103-116 the chain is Cytoplasmic; it reads RCTVFCQESRAKDR. A helical membrane pass occupies residues 117–137; sequence VAVAGGVFFILGGLLGFIPVA. The Extracellular segment spans residues 138–162; the sequence is WNLHGILRDFYSPLVPDSMKFEIGE. The helical transmembrane segment at 163-183 threads the bilayer; that stretch reads ALYLGIISSLFSLIAGIILCF. The Cytoplasmic portion of the chain corresponds to 184-230; sequence SCSSQRNRSNYYDAYQAQPLATRSSPRPGQPPKVKSEFNSYSLTGYV. The tract at residues 205-230 is disordered; that stretch reads TRSSPRPGQPPKVKSEFNSYSLTGYV. Lys-218 is covalently cross-linked (Glycyl lysine isopeptide (Lys-Gly) (interchain with G-Cter in SUMO)). A phosphoserine mark is found at Ser-219 and Ser-223. Residues 220 to 230 are compositionally biased toward polar residues; the sequence is EFNSYSLTGYV. The interval 229–230 is interactions with TJP1, TJP2 and TJP3; sequence YV.

The protein belongs to the claudin family. As to quaternary structure, can form homo- and heteropolymers with other claudins to mediate paracellular barrier and channel functions of tight junctions in response to physiological stimuli. Homopolymers interact with CLDN3, but not CLDN1, homopolymers. Directly interacts with TJP1/ZO-1, TJP2/ZO-2 and TJP3/ZO-3. In terms of processing, the disulfide bond is necessary for pore formation, but is not required for correct protein trafficking.

It localises to the cell junction. The protein localises to the tight junction. The protein resides in the cell membrane. It carries out the reaction Na(+)(in) = Na(+)(out). The enzyme catalyses K(+)(in) = K(+)(out). The catalysed reaction is Rb(+)(in) = Rb(+)(out). It catalyses the reaction Li(+)(in) = Li(+)(out). It carries out the reaction Cs(+)(in) = Cs(+)(out). The enzyme catalyses Ca(2+)(in) = Ca(2+)(out). The catalysed reaction is methylamine(out) = methylamine(in). It catalyses the reaction choline(out) = choline(in). It carries out the reaction H2O(in) = H2O(out). Forms paracellular channels: polymerizes in tight junction strands with cation- and water-selective channels through the strands, conveying epithelial permeability in a process known as paracellular tight junction permeability. In intestinal epithelium, allows for sodium and water fluxes from the peritoneal side to the lumen of the intestine to regulate nutrient absorption and clear enteric pathogens as part of mucosal immune response. In kidney, allows passive sodium and calcium reabsorption across proximal tubules from the lumen back to the bloodstream. In the hepatobiliary tract, allows paracellular water and cation fluxes in the hepatic perivenous areas and biliary epithelium to generate bile flow and maintain osmotic gradients. In Homo sapiens (Human), this protein is Claudin-2.